Reading from the N-terminus, the 158-residue chain is Transcription factor BTF3 homolog 4 (158 aa).

N6-methyllysine is present on lysine 5. One can recognise an NAC-A/B domain in the interval 33-98 (TADDKKLQSS…AEAKPITEML (66 aa)). Threonine 111 carries the post-translational modification Phosphothreonine. Positions 122–158 (RQVLDSKAPKPEDIDEEDDDVPDLVENFDEASKNEAN) are disordered. Residues 134–150 (DIDEEDDDVPDLVENFD) show a composition bias toward acidic residues.

It belongs to the NAC-beta family.

This is Transcription factor BTF3 homolog 4 (BTF3L4) from Homo sapiens (Human).